The following is a 378-amino-acid chain: Cytochrome b (378 aa).

A run of 4 helical transmembrane segments spans residues 34–54 (FGSLLGLCLVIQILSGLFLSM), 78–100 (WLLRSIHANGASFFFMCLYCHIG), 113–133 (TWNVGVVIFFLTMGTAFVGYV), and 179–199 (FFSFHFLFPFMIAGLSMVHLL). Residues His84 and His98 each coordinate heme b. The heme b site is built by His183 and His197. His202 serves as a coordination point for a ubiquinone. Transmembrane regions (helical) follow at residues 225-245 (YSTKDIAGFLVFFFVFFIVVL), 289-306 (LGGVVSLVASIAILFCLP), 313-342 (KFRSLVFYPLNQILFWSFCSIFLLLTWIGM), and 350-369 (IFIGQILTVLYFSYFLLNPL).

It belongs to the cytochrome b family. The main subunits of complex b-c1 are: cytochrome b, cytochrome c1 and the Rieske protein. It depends on heme b as a cofactor.

It is found in the mitochondrion inner membrane. Component of the ubiquinol-cytochrome c reductase complex (complex III or cytochrome b-c1 complex) that is part of the mitochondrial respiratory chain. The b-c1 complex mediates electron transfer from ubiquinol to cytochrome c. Contributes to the generation of a proton gradient across the mitochondrial membrane that is then used for ATP synthesis. The protein is Cytochrome b (mt:Cyt-b) of Loxocorone allax (Goblet worm).